A 285-amino-acid polypeptide reads, in one-letter code: Acetyl-coenzyme A carboxylase carboxyl transferase subunit beta (285 aa).

In terms of domain architecture, CoA carboxyltransferase N-terminal spans 33–285 (MWIKCSKCGK…TLGNILRMHS (253 aa)). Zn(2+) contacts are provided by Cys-37, Cys-40, Cys-56, and Cys-59. A C4-type zinc finger spans residues 37 to 59 (CSKCGKILYKSDVDDNFKVCPKC).

It belongs to the AccD/PCCB family. In terms of assembly, acetyl-CoA carboxylase is a heterohexamer composed of biotin carboxyl carrier protein (AccB), biotin carboxylase (AccC) and two subunits each of ACCase subunit alpha (AccA) and ACCase subunit beta (AccD). Zn(2+) is required as a cofactor.

Its subcellular location is the cytoplasm. The catalysed reaction is N(6)-carboxybiotinyl-L-lysyl-[protein] + acetyl-CoA = N(6)-biotinyl-L-lysyl-[protein] + malonyl-CoA. It functions in the pathway lipid metabolism; malonyl-CoA biosynthesis; malonyl-CoA from acetyl-CoA: step 1/1. In terms of biological role, component of the acetyl coenzyme A carboxylase (ACC) complex. Biotin carboxylase (BC) catalyzes the carboxylation of biotin on its carrier protein (BCCP) and then the CO(2) group is transferred by the transcarboxylase to acetyl-CoA to form malonyl-CoA. The protein is Acetyl-coenzyme A carboxylase carboxyl transferase subunit beta of Clostridium acetobutylicum (strain ATCC 824 / DSM 792 / JCM 1419 / IAM 19013 / LMG 5710 / NBRC 13948 / NRRL B-527 / VKM B-1787 / 2291 / W).